We begin with the raw amino-acid sequence, 404 residues long: Phosphopentomutase (404 aa).

Residues Asp-10, Asp-303, His-308, Asp-344, His-345, and His-356 each coordinate Mn(2+).

The protein belongs to the phosphopentomutase family. Requires Mn(2+) as cofactor.

Its subcellular location is the cytoplasm. It carries out the reaction 2-deoxy-alpha-D-ribose 1-phosphate = 2-deoxy-D-ribose 5-phosphate. It catalyses the reaction alpha-D-ribose 1-phosphate = D-ribose 5-phosphate. It functions in the pathway carbohydrate degradation; 2-deoxy-D-ribose 1-phosphate degradation; D-glyceraldehyde 3-phosphate and acetaldehyde from 2-deoxy-alpha-D-ribose 1-phosphate: step 1/2. Isomerase that catalyzes the conversion of deoxy-ribose 1-phosphate (dRib-1-P) and ribose 1-phosphate (Rib-1-P) to deoxy-ribose 5-phosphate (dRib-5-P) and ribose 5-phosphate (Rib-5-P), respectively. The sequence is that of Phosphopentomutase from Shewanella baltica (strain OS223).